The chain runs to 752 residues: Zinc finger BED domain-containing protein RICESLEEPER 3 (752 aa).

A BED-type zinc finger spans residues 106–166 (RKKSVVWEHF…ASCPMLKNED (61 aa)). Zn(2+) contacts are provided by Cys-129, Cys-132, His-153, and Cys-159. Residues 647–733 (ELEQYLEEAL…EALFCAKDWL (87 aa)) form an HATC (Hobo-Ac-Tam3) domain region.

As to quaternary structure, homodimer.

The protein localises to the nucleus. In terms of biological role, transposase-like protein that is essential for plant growth and development. May regulate global gene expression by recruiting other cellular factors. The chain is Zinc finger BED domain-containing protein RICESLEEPER 3 from Oryza sativa subsp. japonica (Rice).